The sequence spans 561 residues: Hemolysin transporter protein HpmB (561 aa).

An N-terminal signal peptide occupies residues M1 to S17. Positions L77–G150 constitute a POTRA domain.

This sequence belongs to the TPS (TC 1.B.20) family.

It localises to the cell outer membrane. Functionally, interacts with the cell-bound hemolysin. Necessary for the extracellular secretion and activation of the hemolysin. In terms of biological role, probable member of a two partner secretion pathway (TPS) in which it mediates the secretion of hemolysin. This is Hemolysin transporter protein HpmB (hpmB) from Proteus mirabilis.